Here is a 291-residue protein sequence, read N- to C-terminus: Phosphatidylglycerol--prolipoprotein diacylglyceryl transferase (291 aa).

The next 7 helical transmembrane spans lie at 21 to 41 (IALH…MWLA), 60 to 80 (LLYA…VLFY), 96 to 116 (WDGG…MWWF), 124 to 144 (FLQV…MGRI), 198 to 218 (SQLY…NLYI), 225 to 245 (GSVS…VEFF), and 258 to 278 (ISMG…MMIW). Arginine 143 lines the a 1,2-diacyl-sn-glycero-3-phospho-(1'-sn-glycerol) pocket.

Belongs to the Lgt family.

It is found in the cell inner membrane. It catalyses the reaction L-cysteinyl-[prolipoprotein] + a 1,2-diacyl-sn-glycero-3-phospho-(1'-sn-glycerol) = an S-1,2-diacyl-sn-glyceryl-L-cysteinyl-[prolipoprotein] + sn-glycerol 1-phosphate + H(+). It participates in protein modification; lipoprotein biosynthesis (diacylglyceryl transfer). Catalyzes the transfer of the diacylglyceryl group from phosphatidylglycerol to the sulfhydryl group of the N-terminal cysteine of a prolipoprotein, the first step in the formation of mature lipoproteins. This chain is Phosphatidylglycerol--prolipoprotein diacylglyceryl transferase, found in Photorhabdus laumondii subsp. laumondii (strain DSM 15139 / CIP 105565 / TT01) (Photorhabdus luminescens subsp. laumondii).